Here is a 437-residue protein sequence, read N- to C-terminus: MVLFCLVASHRTVDLNTVARLSTGALGVAEDAVSRGALAGAITLSTCNRLELYGELPEHASVDVPGAQQQLAERIARRAGLDERFVLETMDAYEGPEVPRHLFTVVSGLESAVVGEREITGQVRRALAGAQQSGTASPHLVQLFEAAARTAREVGASTGLGERGRSIVSVALDLADDITSGDWPERHALVFGTGAYAGATMAALRDRGCADIEVYSGSGRAQQFTDQRGGSPVTDESLPGALRRADVIIGCSGGSAPMPASRFPAGPRTVVDLALARDFDPAVADLPNVELITLESVRVAAPEETRESVAAAREIVERAARDFENARTARSMDQAIVALRKHTMAVLDAELDKVRTHHGCTGAEEQIEMAMRRMVRSLLHTPTVRARQLAAEGRADEYITGLEALYGLEVAVPDVPEETAPSTRQDPSDTPRPRAVG.

Substrate is bound by residues 46-49 (TCNR), S111, 116-118 (ERE), and Q122. The Nucleophile role is filled by C47. 192 to 197 (GTGAYA) contributes to the NADP(+) binding site. The disordered stretch occupies residues 413 to 437 (PDVPEETAPSTRQDPSDTPRPRAVG). A compositionally biased stretch (basic and acidic residues) spans 426–437 (DPSDTPRPRAVG).

This sequence belongs to the glutamyl-tRNA reductase family. Homodimer.

It carries out the reaction (S)-4-amino-5-oxopentanoate + tRNA(Glu) + NADP(+) = L-glutamyl-tRNA(Glu) + NADPH + H(+). It participates in porphyrin-containing compound metabolism; protoporphyrin-IX biosynthesis; 5-aminolevulinate from L-glutamyl-tRNA(Glu): step 1/2. Functionally, catalyzes the NADPH-dependent reduction of glutamyl-tRNA(Glu) to glutamate 1-semialdehyde (GSA). The polypeptide is Glutamyl-tRNA reductase (Kocuria rhizophila (strain ATCC 9341 / DSM 348 / NBRC 103217 / DC2201)).